We begin with the raw amino-acid sequence, 224 residues long: Protein GrpE (224 aa).

Positions 27-77 (NQASEDIDQENQSEVVDDTTENEDASEEVYEEDTASEDGSKEKKSFFKKKE) are disordered. Positions 31 to 62 (EDIDQENQSEVVDDTTENEDASEEVYEEDTAS) are enriched in acidic residues.

Belongs to the GrpE family. In terms of assembly, homodimer.

The protein resides in the cytoplasm. Participates actively in the response to hyperosmotic and heat shock by preventing the aggregation of stress-denatured proteins, in association with DnaK and GrpE. It is the nucleotide exchange factor for DnaK and may function as a thermosensor. Unfolded proteins bind initially to DnaJ; upon interaction with the DnaJ-bound protein, DnaK hydrolyzes its bound ATP, resulting in the formation of a stable complex. GrpE releases ADP from DnaK; ATP binding to DnaK triggers the release of the substrate protein, thus completing the reaction cycle. Several rounds of ATP-dependent interactions between DnaJ, DnaK and GrpE are required for fully efficient folding. This Lachnoclostridium phytofermentans (strain ATCC 700394 / DSM 18823 / ISDg) (Clostridium phytofermentans) protein is Protein GrpE.